A 339-amino-acid polypeptide reads, in one-letter code: Heat-inducible transcription repressor HrcA (339 aa).

It belongs to the HrcA family.

Its function is as follows. Negative regulator of class I heat shock genes (grpE-dnaK-dnaJ and groELS operons). Prevents heat-shock induction of these operons. In Acidothermus cellulolyticus (strain ATCC 43068 / DSM 8971 / 11B), this protein is Heat-inducible transcription repressor HrcA.